The primary structure comprises 105 residues: Met repressor (105 aa).

Belongs to the MetJ family. In terms of assembly, homodimer.

It is found in the cytoplasm. Functionally, this regulatory protein, when combined with SAM (S-adenosylmethionine) represses the expression of the methionine regulon and of enzymes involved in SAM synthesis. This is Met repressor from Histophilus somni (strain 129Pt) (Haemophilus somnus).